A 377-amino-acid chain; its full sequence is Tubulin--tyrosine ligase (377 aa).

One can recognise a TTL domain in the interval 3–370 (TFVVRQENSS…PPDTEQVPQQ (368 aa)).

It belongs to the tubulin--tyrosine ligase family. In terms of assembly, monomer. Mg(2+) is required as a cofactor. Requires K(+) as cofactor.

The enzyme catalyses C-terminal L-alpha-aminoacyl-L-glutamyl-L-glutamyl-[tubulin] + L-tyrosine + ATP = C-terminal L-alpha-aminoacyl-L-glutamyl-L-glutamyl-L-tyrosyl-[tubulin] + ADP + phosphate + H(+). In terms of biological role, catalyzes the post-translational addition of a tyrosine to the C-terminal end of detyrosinated alpha-tubulin. This Rattus norvegicus (Rat) protein is Tubulin--tyrosine ligase (Ttl).